Consider the following 393-residue polypeptide: Sugar efflux transporter B (393 aa).

12 helical membrane passes run Phe13–Leu33, Met52–Ala72, Leu84–Trp101, Tyr105–Pro124, Val152–Phe172, Val174–Leu194, Leu219–Met239, Leu253–Gly273, Leu283–His303, Leu308–Leu328, Leu344–Ala364, and Ile366–Cys386.

Belongs to the major facilitator superfamily. Set transporter family.

The protein resides in the cell inner membrane. Involved in the efflux of sugars. The physiological role may be the detoxification of non-metabolizable sugar analogs. Can transport lactose and glucose. The chain is Sugar efflux transporter B (setB) from Salmonella typhimurium (strain LT2 / SGSC1412 / ATCC 700720).